Reading from the N-terminus, the 188-residue chain is Cell division protein ZapC (188 aa).

The protein belongs to the ZapC family. As to quaternary structure, interacts directly with FtsZ.

The protein localises to the cytoplasm. Contributes to the efficiency of the cell division process by stabilizing the polymeric form of the cell division protein FtsZ. Acts by promoting interactions between FtsZ protofilaments and suppressing the GTPase activity of FtsZ. This Psychromonas ingrahamii (strain DSM 17664 / CCUG 51855 / 37) protein is Cell division protein ZapC.